The following is a 394-amino-acid chain: Peroxisomal membrane protein PEX25 (394 aa).

Residues 1-25 are compositionally biased toward polar residues; it reads MSQFGTTDIVSGSETPPYSGASYQD. Residues 1–65 are disordered; it reads MSQFGTTDIV…SRSDDEDSQA (65 aa). Residues 1–366 are Cytoplasmic-facing; sequence MSQFGTTDIV…LNLKTPKGTY (366 aa). Residues 51 to 65 are compositionally biased toward basic and acidic residues; sequence SHTESSRSDDEDSQA. 3 positions are modified to phosphoserine: Ser-58, Ser-63, and Ser-289. The chain crosses the membrane as a helical span at residues 367–383; sequence AVLSLGSGLTGLVKLWI. Residues 384–394 are Lumenal-facing; that stretch reads TTKRSLCSSKD.

Homooligomer. Interacts with PEX27 and PEX34.

Its subcellular location is the peroxisome membrane. Its function is as follows. Required for regulation of peroxisome size and maintenance. Has a role in the import of peroxisomal matrix proteins. Imports RHO1 into the peroxisome. Also promotes peroxisome division and biogenesis. The polypeptide is Peroxisomal membrane protein PEX25 (PEX25) (Saccharomyces cerevisiae (strain ATCC 204508 / S288c) (Baker's yeast)).